Reading from the N-terminus, the 162-residue chain is Colicin V production protein (162 aa).

Residues 1–21 (MVWIDYAIIAVIAFSSLVSLI) traverse the membrane as a helical segment. The Cytoplasmic portion of the chain corresponds to 22–31 (RGFVREALSL). The helical transmembrane segment at 32–52 (VTWGCAFFVASHYYTYLSVWF) threads the bilayer. The Periplasmic segment spans residues 53 to 63 (TGFEDELVRNG). Residues 64-84 (IAIAVLFIATLIVGAIVNFVI) form a helical membrane-spanning segment. The Cytoplasmic segment spans residues 85 to 98 (GQLVEKTGLSGTDR). A helical transmembrane segment spans residues 99 to 119 (VLGVCFGALRGVLIVAAILFF). The Periplasmic segment spans residues 120-162 (LDSFTGVSKSEDWSKSQLIPQFSFIIRCFFDYLQSSSSFLPRA).

The protein localises to the cell inner membrane. Its function is as follows. Required for colicin V production from plasmid IncFI ColV3-K30. This Escherichia coli (strain K12) protein is Colicin V production protein (cvpA).